Here is a 197-residue protein sequence, read N- to C-terminus: Imidazoleglycerol-phosphate dehydratase (197 aa).

Belongs to the imidazoleglycerol-phosphate dehydratase family.

Its subcellular location is the cytoplasm. The enzyme catalyses D-erythro-1-(imidazol-4-yl)glycerol 3-phosphate = 3-(imidazol-4-yl)-2-oxopropyl phosphate + H2O. The protein operates within amino-acid biosynthesis; L-histidine biosynthesis; L-histidine from 5-phospho-alpha-D-ribose 1-diphosphate: step 6/9. This chain is Imidazoleglycerol-phosphate dehydratase, found in Methylocella silvestris (strain DSM 15510 / CIP 108128 / LMG 27833 / NCIMB 13906 / BL2).